Consider the following 132-residue polypeptide: Antileukoproteinase (132 aa).

Residues 1–25 (MKSSGLFPFLVLLALGTLAPWAVEG) form the signal peptide. WAP domains follow at residues 28-76 (KSFK…LDPV) and 82-130 (TRRK…VSPV). 8 disulfide bridges follow: Cys-35–Cys-64, Cys-43–Cys-68, Cys-51–Cys-63, Cys-57–Cys-72, Cys-89–Cys-118, Cys-96–Cys-122, Cys-105–Cys-117, and Cys-111–Cys-126. The tract at residues 84-132 (RKPGKCPVTYGQCLMLNPPNFCEMDGQCKRDLKCCMGMCGKSCVSPVKA) is elastase inhibitory domain.

In terms of assembly, interacts with GRN; interaction protects progranulin from proteolysis. In terms of tissue distribution, detected in blood plasma. Detected in bone marrow myeloid cells. Detected in airway sputum. Detected in parotid gland secretions. Detected in seminal plasma (at protein level). Detected in uterus cervix.

It localises to the secreted. Acid-stable proteinase inhibitor with strong affinities for trypsin, chymotrypsin, elastase, and cathepsin G. Modulates the inflammatory and immune responses after bacterial infection, and after infection by the intracellular parasite L.major. Down-regulates responses to bacterial lipopolysaccharide (LPS). Plays a role in regulating the activation of NF-kappa-B and inflammatory responses. Has antimicrobial activity against mycobacteria, but not against salmonella. Contributes to normal resistance against infection by M.tuberculosis. Required for normal resistance to infection by L.major. Required for normal wound healing, probably by preventing tissue damage by limiting protease activity. Together with ELANE, required for normal differentiation and proliferation of bone marrow myeloid cells. The chain is Antileukoproteinase (SLPI) from Homo sapiens (Human).